We begin with the raw amino-acid sequence, 92 residues long: Small ribosomal subunit protein uS19 (92 aa).

Belongs to the universal ribosomal protein uS19 family.

Its function is as follows. Protein S19 forms a complex with S13 that binds strongly to the 16S ribosomal RNA. In Rhizobium rhizogenes (strain K84 / ATCC BAA-868) (Agrobacterium radiobacter), this protein is Small ribosomal subunit protein uS19.